Consider the following 207-residue polypeptide: Thiamine-phosphate synthase (207 aa).

4-amino-2-methyl-5-(diphosphooxymethyl)pyrimidine-binding positions include 35 to 39 (QYRDK) and asparagine 67. Mg(2+) contacts are provided by aspartate 68 and aspartate 86. Threonine 105 is a 4-amino-2-methyl-5-(diphosphooxymethyl)pyrimidine binding site. 132-134 (SVT) is a 2-[(2R,5Z)-2-carboxy-4-methylthiazol-5(2H)-ylidene]ethyl phosphate binding site. Residue lysine 135 coordinates 4-amino-2-methyl-5-(diphosphooxymethyl)pyrimidine. Glycine 162 contacts 2-[(2R,5Z)-2-carboxy-4-methylthiazol-5(2H)-ylidene]ethyl phosphate.

It belongs to the thiamine-phosphate synthase family. Requires Mg(2+) as cofactor.

It catalyses the reaction 2-[(2R,5Z)-2-carboxy-4-methylthiazol-5(2H)-ylidene]ethyl phosphate + 4-amino-2-methyl-5-(diphosphooxymethyl)pyrimidine + 2 H(+) = thiamine phosphate + CO2 + diphosphate. It carries out the reaction 2-(2-carboxy-4-methylthiazol-5-yl)ethyl phosphate + 4-amino-2-methyl-5-(diphosphooxymethyl)pyrimidine + 2 H(+) = thiamine phosphate + CO2 + diphosphate. The enzyme catalyses 4-methyl-5-(2-phosphooxyethyl)-thiazole + 4-amino-2-methyl-5-(diphosphooxymethyl)pyrimidine + H(+) = thiamine phosphate + diphosphate. Its pathway is cofactor biosynthesis; thiamine diphosphate biosynthesis; thiamine phosphate from 4-amino-2-methyl-5-diphosphomethylpyrimidine and 4-methyl-5-(2-phosphoethyl)-thiazole: step 1/1. In terms of biological role, condenses 4-methyl-5-(beta-hydroxyethyl)thiazole monophosphate (THZ-P) and 2-methyl-4-amino-5-hydroxymethyl pyrimidine pyrophosphate (HMP-PP) to form thiamine monophosphate (TMP). The chain is Thiamine-phosphate synthase from Pseudomonas putida (strain GB-1).